Reading from the N-terminus, the 71-residue chain is Sec-independent protein translocase protein TatA (71 aa).

A helical transmembrane segment spans residues 1–21 (MGSFSLLHWLVVLVIVLLVFG). A disordered region spans residues 43–71 (LREDDKPTDQLGSTSQSTASGPQQDHGKH). Over residues 52-65 (QLGSTSQSTASGPQ) the composition is skewed to polar residues.

It belongs to the TatA/E family. As to quaternary structure, the Tat system comprises two distinct complexes: a TatABC complex, containing multiple copies of TatA, TatB and TatC subunits, and a separate TatA complex, containing only TatA subunits. Substrates initially bind to the TatABC complex, which probably triggers association of the separate TatA complex to form the active translocon.

It is found in the cell inner membrane. In terms of biological role, part of the twin-arginine translocation (Tat) system that transports large folded proteins containing a characteristic twin-arginine motif in their signal peptide across membranes. TatA could form the protein-conducting channel of the Tat system. This Xylella fastidiosa (strain 9a5c) protein is Sec-independent protein translocase protein TatA.